The primary structure comprises 156 residues: Putative pre-16S rRNA nuclease (156 aa).

The protein belongs to the YqgF nuclease family.

Its subcellular location is the cytoplasm. Could be a nuclease involved in processing of the 5'-end of pre-16S rRNA. This Ehrlichia ruminantium (strain Welgevonden) protein is Putative pre-16S rRNA nuclease.